Reading from the N-terminus, the 184-residue chain is Photosystem I assembly protein Ycf4 (184 aa).

The next 2 helical transmembrane spans lie at 20-40 (GNFFWAFILFLGSLGFLVVGI) and 64-84 (IVMSFYGIAGLFISSYLWCTI).

This sequence belongs to the Ycf4 family.

The protein resides in the plastid. Its subcellular location is the chloroplast thylakoid membrane. In terms of biological role, seems to be required for the assembly of the photosystem I complex. This is Photosystem I assembly protein Ycf4 from Citrus sinensis (Sweet orange).